Here is a 334-residue protein sequence, read N- to C-terminus: Protein U17/U16 (334 aa).

It belongs to the herpesviridae US22 family. Post-translationally, isoform 1 is not glycosylated.

Functionally, isoform 3 can transactivate the human immunodeficiency virus type 1 promoter. This is Protein U17/U16 (U17/U16) from Homo sapiens (Human).